The sequence spans 456 residues: Anthranilate synthase component 1 (456 aa).

Residues Ser31 and 244 to 246 (SYM) contribute to the L-tryptophan site. 279–280 (GT) contributes to the chorismate binding site. Glu306 lines the Mg(2+) pocket. Chorismate is bound by residues Tyr394, Arg414, 428-430 (GAG), and Gly430. Glu443 contributes to the Mg(2+) binding site.

This sequence belongs to the anthranilate synthase component I family. Heterotetramer consisting of two non-identical subunits: a beta subunit (TrpG) and a large alpha subunit (TrpE). Mg(2+) serves as cofactor.

The enzyme catalyses chorismate + L-glutamine = anthranilate + pyruvate + L-glutamate + H(+). The protein operates within amino-acid biosynthesis; L-tryptophan biosynthesis; L-tryptophan from chorismate: step 1/5. Its activity is regulated as follows. Feedback inhibited by tryptophan. Part of a heterotetrameric complex that catalyzes the two-step biosynthesis of anthranilate, an intermediate in the biosynthesis of L-tryptophan. In the first step, the glutamine-binding beta subunit (TrpG) of anthranilate synthase (AS) provides the glutamine amidotransferase activity which generates ammonia as a substrate that, along with chorismate, is used in the second step, catalyzed by the large alpha subunit of AS (TrpE) to produce anthranilate. In the absence of TrpG, TrpE can synthesize anthranilate directly from chorismate and high concentrations of ammonia. The chain is Anthranilate synthase component 1 (trpE) from Lactococcus lactis subsp. lactis (strain IL1403) (Streptococcus lactis).